Here is a 132-residue protein sequence, read N- to C-terminus: Small ribosomal subunit protein uS8 (132 aa).

The protein belongs to the universal ribosomal protein uS8 family. As to quaternary structure, part of the 30S ribosomal subunit. Contacts proteins S5 and S12.

Its function is as follows. One of the primary rRNA binding proteins, it binds directly to 16S rRNA central domain where it helps coordinate assembly of the platform of the 30S subunit. In Alkaliphilus metalliredigens (strain QYMF), this protein is Small ribosomal subunit protein uS8.